We begin with the raw amino-acid sequence, 344 residues long: Phenylalanine--tRNA ligase alpha subunit (344 aa).

Position 258 (E258) interacts with Mg(2+).

It belongs to the class-II aminoacyl-tRNA synthetase family. Phe-tRNA synthetase alpha subunit type 1 subfamily. As to quaternary structure, tetramer of two alpha and two beta subunits. Mg(2+) serves as cofactor.

It localises to the cytoplasm. The catalysed reaction is tRNA(Phe) + L-phenylalanine + ATP = L-phenylalanyl-tRNA(Phe) + AMP + diphosphate + H(+). This chain is Phenylalanine--tRNA ligase alpha subunit, found in Thiobacillus denitrificans (strain ATCC 25259 / T1).